Reading from the N-terminus, the 317-residue chain is TPR repeat-containing thioredoxin TDX (317 aa).

The disordered stretch occupies residues 1 to 48; the sequence is MATAGASSFEDEIMESDIELEGEAVEPDNDPPQKMGDPSVEVSDEKRD. Over residues 9-29 the composition is skewed to acidic residues; the sequence is FEDEIMESDIELEGEAVEPDN. TPR repeat units lie at residues 50–83, 85–117, and 119–151; these read AQLC…NPTS, IAYA…NPDS, and KGYK…DYDE. The Thioredoxin domain occupies 189-316; the sequence is EKQRKHAEEV…LERKVAQHGS (128 aa). Catalysis depends on nucleophile residues C242 and C245. C242 and C245 are oxidised to a cystine.

It belongs to the thioredoxin family.

In terms of biological role, probable thiol-disulfide oxidoreductase that may participate in various redox reactions and act as chaperone under heat shock. May interact with HSP70 proteins through the TPR repeats. The chain is TPR repeat-containing thioredoxin TDX from Oryza sativa subsp. japonica (Rice).